Consider the following 503-residue polypeptide: Activin receptor type-1-like (503 aa).

An N-terminal signal peptide occupies residues 1–21 (MTLGSPRKGLLMLLMALVTQG). Over 22 to 118 (DPVKPSRGPL…PSEQPGTDGQ (97 aa)) the chain is Extracellular. 3 cysteine pairs are disulfide-bonded: cysteine 34-cysteine 51, cysteine 36-cysteine 41, and cysteine 46-cysteine 69. Residues 73 to 76 (HREL) are mediates specificity for BMP ligand. Intrachain disulfides connect cysteine 77–cysteine 89 and cysteine 90–cysteine 95. Asparagine 98 carries an N-linked (GlcNAc...) asparagine glycan. A helical transmembrane segment spans residues 119 to 141 (LALILGPVLALLALVALGVLGLW). Over 142 to 503 (HVRRRQEKQR…NSPEKPKVIQ (362 aa)) the chain is Cytoplasmic. 3 positions are modified to phosphoserine: serine 155, serine 160, and serine 161. Residues 172–201 (SMLGDLLDSDCTTGSGSGLPFLVQRTVARQ) form the GS domain. Residues 202-492 (VALVECVGKG…LRIKKTLQKI (291 aa)) enclose the Protein kinase domain. ATP-binding positions include 208-216 (VGKGRYGEV) and lysine 229. The active-site Proton acceptor is aspartate 330.

It belongs to the protein kinase superfamily. TKL Ser/Thr protein kinase family. TGFB receptor subfamily. In terms of assembly, interacts with TSC22D1/TSC-22. It depends on Mg(2+) as a cofactor. Mn(2+) is required as a cofactor.

The protein localises to the cell membrane. The catalysed reaction is L-threonyl-[receptor-protein] + ATP = O-phospho-L-threonyl-[receptor-protein] + ADP + H(+). It carries out the reaction L-seryl-[receptor-protein] + ATP = O-phospho-L-seryl-[receptor-protein] + ADP + H(+). Type I receptor for TGF-beta family ligands BMP9/GDF2 and BMP10 and important regulator of normal blood vessel development. On ligand binding, forms a receptor complex consisting of two type II and two type I transmembrane serine/threonine kinases. Type II receptors phosphorylate and activate type I receptors which autophosphorylate, then bind and activate SMAD transcriptional regulators. May bind activin as well. This Homo sapiens (Human) protein is Activin receptor type-1-like (ACVRL1).